A 661-amino-acid chain; its full sequence is Solute carrier organic anion transporter family member 1A4 (661 aa).

Over 1 to 20 (MGKSEKRVATHGVRCFAKIK) the chain is Cytoplasmic. Residues 21 to 40 (MFLLALTCAYVSKSLSGTYM) traverse the membrane as a helical segment. Residues 41–59 (NSMLTQIERQFGIPTSIVG) are Extracellular-facing. Residues 60-80 (LINGSFEIGNLLLIIFVSYFG) form a helical membrane-spanning segment. The Cytoplasmic portion of the chain corresponds to 81-86 (TKLHRP). The chain crosses the membrane as a helical span at residues 87–111 (IMIGVGCAVMGLGCFLISLPHFLMG). Over 112–154 (QYEYETILPTSNVSSNSFFCVENRSQTLNPTQDPSECVKEMKS) the chain is Extracellular. N-linked (GlcNAc...) asparagine glycosylation is found at asparagine 123 and asparagine 134. The chain crosses the membrane as a helical span at residues 155 to 183 (LMWIYVLVGNIIRGIGETPIMPLGISYIE). The Cytoplasmic portion of the chain corresponds to 184–202 (DFAKSENSPLYIGILETGM). A helical membrane pass occupies residues 203-223 (TIGPLIGLLLASSCANIYVDI). Topologically, residues 224–241 (ESVNTDDLTITPTDTRWV) are extracellular. A helical transmembrane segment spans residues 242 to 266 (GAWWIGFLVCAGVNILTSFPFFFFP). At 267–310 (KTLPKEGLQENVDGTENAKEKKHRKKAKEEKRGITKDFFVFMKS) the chain is on the cytoplasmic side. A helical membrane pass occupies residues 311–332 (LSCNPIYMLFILISVLQFNAFI). Residues 333–352 (NSFTFMPKYLEQQYGKSTAE) are Extracellular-facing. A helical transmembrane segment spans residues 353 to 376 (VVFLMGLYMLPPICLGYLIGGLIM). The Cytoplasmic portion of the chain corresponds to 377–380 (KKFK). The helical transmembrane segment at 381 to 404 (VTVKKAAHLAFWLCLSEYLLSFLS) threads the bilayer. The Extracellular portion of the chain corresponds to 405–512 (YVMTCDNFPV…PDCANKLQYF (108 aa)). The Kazal-like domain occupies 432-487 (NKVLADCNTRCNCSTNTWDPVCGDNGLAYMSACLAGCEKSVGTGTNMVFQNCSCIQ). 3 disulfides stabilise this stretch: cysteine 438–cysteine 468, cysteine 444–cysteine 464, and cysteine 453–cysteine 485. N-linked (GlcNAc...) asparagine glycosylation occurs at asparagine 443. Residues asparagine 482 and asparagine 491 are each glycosylated (N-linked (GlcNAc...) asparagine). Residues 513–535 (LIIAIFGCFIYSLAGIPGYMVLL) traverse the membrane as a helical segment. The Cytoplasmic segment spans residues 536–544 (RCIKSEEKS). Residues 545-570 (LGVGLHAFCIRILAGIPAPIYFGALI) form a helical membrane-spanning segment. The Extracellular segment spans residues 571 to 604 (DRTCLHWGTLKCGEPGACRMYDINSFRRLYLGLP). A helical transmembrane segment spans residues 605–622 (AALRGASFVPAFFILRLT). Topologically, residues 623–661 (RTFQFPGDIESSKTDHAEMKLTLKESECTEVLRSKVTED) are cytoplasmic. Serine 633 and serine 634 each carry phosphoserine.

Belongs to the organo anion transporter (TC 2.A.60) family. Highly expressed in brain, liver, and kidney but not expressed in heart, spleen, lung, skeletal muscle, and testis.

Its subcellular location is the cell membrane. It carries out the reaction estrone 3-sulfate(out) = estrone 3-sulfate(in). It catalyses the reaction taurocholate(out) = taurocholate(in). The catalysed reaction is prostaglandin E2(out) = prostaglandin E2(in). The enzyme catalyses L-thyroxine(out) = L-thyroxine(in). In terms of biological role, mediates the Na(+)-independent transport of organic anions such as taurocholate, cholate, 17-beta-glucuronosyl estradiol, prostaglandin E2, estrone 3-sulfate, L-thyroxine (T4), the cardiac glycosides ouabain and digoxin and thyroid hormones. May play an especially important role in the brain accumulation and toxicity of digoxin and in the hepatobiliary and renal excretion of cardiac glycosides. Shows a pH-sensitive substrate specificity which may be ascribed to the protonation state of the binding site and leads to a stimulation of substrate transport in an acidic microenvironment. Hydrogencarbonate/HCO3(-) acts as the probable counteranion that exchanges for organic anions. This chain is Solute carrier organic anion transporter family member 1A4 (Slco1a4), found in Rattus norvegicus (Rat).